The primary structure comprises 424 residues: Histidine--tRNA ligase (424 aa).

It belongs to the class-II aminoacyl-tRNA synthetase family. As to quaternary structure, homodimer.

The protein resides in the cytoplasm. The enzyme catalyses tRNA(His) + L-histidine + ATP = L-histidyl-tRNA(His) + AMP + diphosphate + H(+). The sequence is that of Histidine--tRNA ligase from Francisella philomiragia subsp. philomiragia (strain ATCC 25017 / CCUG 19701 / FSC 153 / O#319-036).